A 304-amino-acid polypeptide reads, in one-letter code: Acetyl-coenzyme A carboxylase carboxyl transferase subunit beta (304 aa).

The segment at 16-42 (SSLPPKNSEGGLAYFDEPSPEQESTRK) is disordered. The CoA carboxyltransferase N-terminal domain occupies 48–304 (LWVKCPKCGE…LLRYHQEGAV (257 aa)). Positions 52, 55, 71, and 74 each coordinate Zn(2+). The segment at 52 to 74 (CPKCGEALFNKDLVENQRVCLTC) adopts a C4-type zinc-finger fold.

Belongs to the AccD/PCCB family. In terms of assembly, acetyl-CoA carboxylase is a heterohexamer composed of biotin carboxyl carrier protein (AccB), biotin carboxylase (AccC) and two subunits each of ACCase subunit alpha (AccA) and ACCase subunit beta (AccD). Zn(2+) serves as cofactor.

It localises to the cytoplasm. The enzyme catalyses N(6)-carboxybiotinyl-L-lysyl-[protein] + acetyl-CoA = N(6)-biotinyl-L-lysyl-[protein] + malonyl-CoA. It functions in the pathway lipid metabolism; malonyl-CoA biosynthesis; malonyl-CoA from acetyl-CoA: step 1/1. Its function is as follows. Component of the acetyl coenzyme A carboxylase (ACC) complex. Biotin carboxylase (BC) catalyzes the carboxylation of biotin on its carrier protein (BCCP) and then the CO(2) group is transferred by the transcarboxylase to acetyl-CoA to form malonyl-CoA. The chain is Acetyl-coenzyme A carboxylase carboxyl transferase subunit beta from Desulfitobacterium hafniense (strain Y51).